The chain runs to 186 residues: Protein GrpE (186 aa).

Belongs to the GrpE family. As to quaternary structure, homodimer.

It is found in the cytoplasm. Its function is as follows. Participates actively in the response to hyperosmotic and heat shock by preventing the aggregation of stress-denatured proteins, in association with DnaK and GrpE. It is the nucleotide exchange factor for DnaK and may function as a thermosensor. Unfolded proteins bind initially to DnaJ; upon interaction with the DnaJ-bound protein, DnaK hydrolyzes its bound ATP, resulting in the formation of a stable complex. GrpE releases ADP from DnaK; ATP binding to DnaK triggers the release of the substrate protein, thus completing the reaction cycle. Several rounds of ATP-dependent interactions between DnaJ, DnaK and GrpE are required for fully efficient folding. The polypeptide is Protein GrpE (Novosphingobium aromaticivorans (strain ATCC 700278 / DSM 12444 / CCUG 56034 / CIP 105152 / NBRC 16084 / F199)).